Here is a 684-residue protein sequence, read N- to C-terminus: Glycine--tRNA ligase beta subunit (684 aa).

This sequence belongs to the class-II aminoacyl-tRNA synthetase family. In terms of assembly, tetramer of two alpha and two beta subunits.

It localises to the cytoplasm. It carries out the reaction tRNA(Gly) + glycine + ATP = glycyl-tRNA(Gly) + AMP + diphosphate. In Stutzerimonas stutzeri (strain A1501) (Pseudomonas stutzeri), this protein is Glycine--tRNA ligase beta subunit.